A 560-amino-acid polypeptide reads, in one-letter code: Dihydroxy-acid dehydratase (560 aa).

Residue Cys-52 coordinates [2Fe-2S] cluster. Position 84 (Asp-84) interacts with Mg(2+). Cys-125 contributes to the [2Fe-2S] cluster binding site. Residues Asp-126 and Lys-127 each contribute to the Mg(2+) site. Lys-127 is subject to N6-carboxylysine. Residue Cys-197 coordinates [2Fe-2S] cluster. Glu-448 serves as a coordination point for Mg(2+). Ser-474 functions as the Proton acceptor in the catalytic mechanism.

The protein belongs to the IlvD/Edd family. As to quaternary structure, homodimer. It depends on [2Fe-2S] cluster as a cofactor. Mg(2+) is required as a cofactor.

It catalyses the reaction (2R)-2,3-dihydroxy-3-methylbutanoate = 3-methyl-2-oxobutanoate + H2O. The enzyme catalyses (2R,3R)-2,3-dihydroxy-3-methylpentanoate = (S)-3-methyl-2-oxopentanoate + H2O. Its pathway is amino-acid biosynthesis; L-isoleucine biosynthesis; L-isoleucine from 2-oxobutanoate: step 3/4. It participates in amino-acid biosynthesis; L-valine biosynthesis; L-valine from pyruvate: step 3/4. Functionally, functions in the biosynthesis of branched-chain amino acids. Catalyzes the dehydration of (2R,3R)-2,3-dihydroxy-3-methylpentanoate (2,3-dihydroxy-3-methylvalerate) into 2-oxo-3-methylpentanoate (2-oxo-3-methylvalerate) and of (2R)-2,3-dihydroxy-3-methylbutanoate (2,3-dihydroxyisovalerate) into 2-oxo-3-methylbutanoate (2-oxoisovalerate), the penultimate precursor to L-isoleucine and L-valine, respectively. This is Dihydroxy-acid dehydratase from Francisella tularensis subsp. tularensis (strain WY96-3418).